Reading from the N-terminus, the 367-residue chain is Di-N-acetylchitobiase (367 aa).

The signal sequence occupies residues 1–23; that stretch reads MALSDLLELTLLLLLPLLERLSA. The GH18 domain occupies 24–367; the sequence is EDCPCSEASL…EMWGALRPRL (344 aa). Glutamate 128 functions as the Proton donor in the catalytic mechanism. N-linked (GlcNAc...) asparagine glycans are attached at residues asparagine 178, asparagine 213, asparagine 247, and asparagine 284.

Belongs to the glycosyl hydrolase 18 family.

The protein resides in the lysosome. Functionally, involved in the degradation of asparagine-linked glycoproteins. Hydrolyze of N-acetyl-beta-D-glucosamine (1-4)N-acetylglucosamine chitobiose core from the reducing end of the bond, it requires prior cleavage by glycosylasparaginase. The polypeptide is Di-N-acetylchitobiase (Ctbs) (Rattus norvegicus (Rat)).